Reading from the N-terminus, the 202-residue chain is Urease accessory protein UreE (202 aa).

The span at H171–H188 shows a compositional bias: basic and acidic residues. The segment at H171 to H202 is disordered.

It belongs to the UreE family.

It is found in the cytoplasm. Its function is as follows. Involved in urease metallocenter assembly. Binds nickel. Probably functions as a nickel donor during metallocenter assembly. In Burkholderia ambifaria (strain ATCC BAA-244 / DSM 16087 / CCUG 44356 / LMG 19182 / AMMD) (Burkholderia cepacia (strain AMMD)), this protein is Urease accessory protein UreE.